Here is a 187-residue protein sequence, read N- to C-terminus: Tumor necrosis factor ligand superfamily member 4 (187 aa).

Over 1-23 the chain is Cytoplasmic; the sequence is MEGVRPLEENVGNAPRPRFERNK. Residues 24–44 traverse the membrane as a helical; Signal-anchor for type II membrane protein segment; that stretch reads LLLVASVVQALGLLLCLTYVC. Residues 45–187 are Extracellular-facing; it reads QHSHAPEVSL…LQNPGGYCAP (143 aa). Residues 58-177 form the THD domain; it reads PIENIMTQLQ…SVNAGELIVI (120 aa). Cystine bridges form between C74/C164 and C101/C185. N-linked (GlcNAc...) asparagine glycosylation is found at N94 and N156.

Belongs to the tumor necrosis factor family. As to quaternary structure, homotrimer.

The protein localises to the membrane. In terms of biological role, cytokine that binds to TNFRSF4. Co-stimulates T-cell proliferation and cytokine production. In Oryctolagus cuniculus (Rabbit), this protein is Tumor necrosis factor ligand superfamily member 4 (TNFSF4).